The following is a 369-amino-acid chain: Putative FAD-dependent monooxygenase YetM (369 aa).

The first 32 residues, 1–32 (MKHMLIAGGGIGGLSAAISLRKAGFSVTLCEA), serve as a signal peptide directing secretion. FAD contacts are provided by residues G12, 31 to 32 (EA), V126, and D285.

Requires FAD as cofactor.

The chain is Putative FAD-dependent monooxygenase YetM (yetM) from Bacillus subtilis (strain 168).